We begin with the raw amino-acid sequence, 152 residues long: Aspartate carbamoyltransferase regulatory chain (152 aa).

The Zn(2+) site is built by C107, C112, C136, and C139.

This sequence belongs to the PyrI family. Contains catalytic and regulatory chains. Zn(2+) serves as cofactor.

In terms of biological role, involved in allosteric regulation of aspartate carbamoyltransferase. This chain is Aspartate carbamoyltransferase regulatory chain, found in Chromobacterium violaceum (strain ATCC 12472 / DSM 30191 / JCM 1249 / CCUG 213 / NBRC 12614 / NCIMB 9131 / NCTC 9757 / MK).